The primary structure comprises 407 residues: 1-deoxy-D-xylulose 5-phosphate reductoisomerase (407 aa).

Residues T25, G26, S27, I28, N53, and N136 each contribute to the NADPH site. A 1-deoxy-D-xylulose 5-phosphate-binding site is contributed by K137. Position 138 (E138) interacts with NADPH. D162 contributes to the Mn(2+) binding site. The 1-deoxy-D-xylulose 5-phosphate site is built by S163, E164, S188, and H211. A Mn(2+)-binding site is contributed by E164. G217 contacts NADPH. 1-deoxy-D-xylulose 5-phosphate-binding residues include S224, N229, K230, and E233. E233 lines the Mn(2+) pocket.

The protein belongs to the DXR family. Mg(2+) is required as a cofactor. The cofactor is Mn(2+).

It carries out the reaction 2-C-methyl-D-erythritol 4-phosphate + NADP(+) = 1-deoxy-D-xylulose 5-phosphate + NADPH + H(+). Its pathway is isoprenoid biosynthesis; isopentenyl diphosphate biosynthesis via DXP pathway; isopentenyl diphosphate from 1-deoxy-D-xylulose 5-phosphate: step 1/6. Catalyzes the NADPH-dependent rearrangement and reduction of 1-deoxy-D-xylulose-5-phosphate (DXP) to 2-C-methyl-D-erythritol 4-phosphate (MEP). The chain is 1-deoxy-D-xylulose 5-phosphate reductoisomerase from Rhodopseudomonas palustris (strain BisB18).